A 191-amino-acid chain; its full sequence is Probable DNA-directed RNA polymerase subunit delta (191 aa).

The region spanning 14–83 (LSMIEVARAI…GDNKWGLRSW (70 aa)) is the HTH HARE-type domain. Acidic residues-rich tracts occupy residues 119-133 (EDAIDYNDDDPEDEN) and 143-191 (YDND…ETND). Residues 119-191 (EDAIDYNDDD…DDDYEDETND (73 aa)) are disordered.

It belongs to the RpoE family. As to quaternary structure, RNAP is composed of a core of 2 alpha, a beta and a beta' subunits. The core is associated with a delta subunit and one of several sigma factors.

In terms of biological role, participates in both the initiation and recycling phases of transcription. In the presence of the delta subunit, RNAP displays an increased specificity of transcription, a decreased affinity for nucleic acids, and an increased efficiency of RNA synthesis because of enhanced recycling. The protein is Probable DNA-directed RNA polymerase subunit delta of Streptococcus thermophilus (strain ATCC BAA-491 / LMD-9).